A 350-amino-acid polypeptide reads, in one-letter code: Zona pellucida-binding protein 1 (350 aa).

A signal peptide spans 1–38 (MEASAPDRARRGWRRARAAASPLSRAAVVLLLSALVLR). Residues Asn113, Asn186, and Asn339 are each glycosylated (N-linked (GlcNAc...) asparagine).

Belongs to the zona pellucida-binding protein Sp38 family. In terms of processing, N-glycosylated. As to expression, expressed in testis. Detected in sperm cells.

The protein resides in the cytoplasmic vesicle. It localises to the secretory vesicle. It is found in the acrosome. The protein localises to the secreted. Its subcellular location is the acrosome membrane. Functionally, plays a role in acrosome compaction and sperm morphogenesis. Is implicated in sperm-oocyte interaction during fertilization. The protein is Zona pellucida-binding protein 1 (ZPBP) of Sus scrofa (Pig).